The sequence spans 908 residues: DNA mismatch repair protein MutS (908 aa).

662–669 (GPNMGGKS) lines the ATP pocket.

Belongs to the DNA mismatch repair MutS family.

Functionally, this protein is involved in the repair of mismatches in DNA. It is possible that it carries out the mismatch recognition step. This protein has a weak ATPase activity. This Rhizobium johnstonii (strain DSM 114642 / LMG 32736 / 3841) (Rhizobium leguminosarum bv. viciae) protein is DNA mismatch repair protein MutS.